The sequence spans 307 residues: Transaldolase (307 aa).

Residue K125 is the Schiff-base intermediate with substrate of the active site.

It belongs to the transaldolase family. Type 1 subfamily. In terms of assembly, homodimer.

It is found in the cytoplasm. It catalyses the reaction D-sedoheptulose 7-phosphate + D-glyceraldehyde 3-phosphate = D-erythrose 4-phosphate + beta-D-fructose 6-phosphate. It participates in carbohydrate degradation; pentose phosphate pathway; D-glyceraldehyde 3-phosphate and beta-D-fructose 6-phosphate from D-ribose 5-phosphate and D-xylulose 5-phosphate (non-oxidative stage): step 2/3. Functionally, transaldolase is important for the balance of metabolites in the pentose-phosphate pathway. The sequence is that of Transaldolase from Pseudomonas paraeruginosa (strain DSM 24068 / PA7) (Pseudomonas aeruginosa (strain PA7)).